A 270-amino-acid chain; its full sequence is Putative pyruvate, phosphate dikinase regulatory protein (270 aa).

An ADP-binding site is contributed by 153–160 (GVSRTSKT).

The protein belongs to the pyruvate, phosphate/water dikinase regulatory protein family. PDRP subfamily.

The catalysed reaction is N(tele)-phospho-L-histidyl/L-threonyl-[pyruvate, phosphate dikinase] + ADP = N(tele)-phospho-L-histidyl/O-phospho-L-threonyl-[pyruvate, phosphate dikinase] + AMP + H(+). It catalyses the reaction N(tele)-phospho-L-histidyl/O-phospho-L-threonyl-[pyruvate, phosphate dikinase] + phosphate + H(+) = N(tele)-phospho-L-histidyl/L-threonyl-[pyruvate, phosphate dikinase] + diphosphate. In terms of biological role, bifunctional serine/threonine kinase and phosphorylase involved in the regulation of the pyruvate, phosphate dikinase (PPDK) by catalyzing its phosphorylation/dephosphorylation. This chain is Putative pyruvate, phosphate dikinase regulatory protein, found in Halalkalibacterium halodurans (strain ATCC BAA-125 / DSM 18197 / FERM 7344 / JCM 9153 / C-125) (Bacillus halodurans).